Reading from the N-terminus, the 948-residue chain is Coatomer subunit beta-1 (948 aa).

HEAT repeat units follow at residues 49–87 (ETIPQLFITIIRYVLPSEDHTIQKLLLLYLELIEKTDSK), 92–126 (PEMILICQNLRNNLQHPNEYIRGVTLRFLCRMKET), 127–164 (EIVEPLTPSVLQNLEHRHPFVRRNAILAIMSIYKLPQG), 274–311 (TAIRAAANTYCQLLLSQSDNNVKLILLDRLYELKTLHR), 312–349 (DIMVELIIDVLRALSSPNLDIRRKTLDISLDLITHHNI), and 391–428 (EVASTVVHLLMDFLGDSNVASALDVVVFVREIIETNPK).

As to quaternary structure, oligomeric complex that consists of at least the alpha, beta, beta', gamma, delta, epsilon and zeta subunits.

It localises to the cytoplasm. The protein localises to the golgi apparatus membrane. It is found in the cytoplasmic vesicle. Its subcellular location is the COPI-coated vesicle membrane. In terms of biological role, the coatomer is a cytosolic protein complex that binds to dilysine motifs and reversibly associates with Golgi non-clathrin-coated vesicles, which further mediate biosynthetic protein transport from the ER, via the Golgi up to the trans Golgi network. Coatomer complex is required for budding from Golgi membranes, and is essential for the retrograde Golgi-to-ER transport of dilysine-tagged proteins. This chain is Coatomer subunit beta-1, found in Arabidopsis thaliana (Mouse-ear cress).